An 88-amino-acid polypeptide reads, in one-letter code: Phosphocarrier protein HPr (88 aa).

The region spanning 1–88 is the HPr domain; that stretch reads MKKIQVVVKD…KAVLEKHQVI (88 aa). The active-site Pros-phosphohistidine intermediate is His-15. A Phosphoserine; by HPrK/P modification is found at Ser-47.

Belongs to the HPr family.

It localises to the cytoplasm. With respect to regulation, phosphorylation on Ser-47 inhibits the phosphoryl transfer from enzyme I to HPr. Functionally, general (non sugar-specific) component of the phosphoenolpyruvate-dependent sugar phosphotransferase system (sugar PTS). This major carbohydrate active-transport system catalyzes the phosphorylation of incoming sugar substrates concomitantly with their translocation across the cell membrane. The phosphoryl group from phosphoenolpyruvate (PEP) is transferred to the phosphoryl carrier protein HPr by enzyme I. Phospho-HPr then transfers it to the PTS EIIA domain. P-Ser-HPr interacts with the catabolite control protein A (CcpA), forming a complex that binds to DNA at the catabolite response elements cre, operator sites preceding a large number of catabolite-regulated genes. Thus, P-Ser-HPr is a corepressor in carbon catabolite repression (CCR), a mechanism that allows bacteria to coordinate and optimize the utilization of available carbon sources. P-Ser-HPr also plays a role in inducer exclusion, in which it probably interacts with several non-PTS permeases and inhibits their transport activity. This Mycoplasma pneumoniae (strain ATCC 29342 / M129 / Subtype 1) (Mycoplasmoides pneumoniae) protein is Phosphocarrier protein HPr (ptsH).